We begin with the raw amino-acid sequence, 61 residues long: DGYIRKRDGCKVSCLFGNEGCDKECKAYGGSYGYCWTWGLACWCEGLPDDKTWKSETNTCG.

One can recognise an LCN-type CS-alpha/beta domain in the interval aspartate 1–glycine 61. 4 disulfides stabilise this stretch: cysteine 10-cysteine 60, cysteine 14-cysteine 35, cysteine 21-cysteine 42, and cysteine 25-cysteine 44. Glycine 61 is subject to Glycine amide.

It belongs to the long (4 C-C) scorpion toxin superfamily. Sodium channel inhibitor family. Beta subfamily. As to expression, expressed by the venom gland.

The protein resides in the secreted. Its function is as follows. Depressant insect beta-toxins cause a transient contraction paralysis followed by a slow flaccid paralysis. They bind voltage-independently at site-4 of sodium channels (Nav) and shift the voltage of activation toward more negative potentials thereby affecting sodium channel activation and promoting spontaneous and repetitive firing. This toxin is active only on insects. This Buthus occitanus tunetanus (Common European scorpion) protein is Beta-insect depressant toxin BotIT5.